We begin with the raw amino-acid sequence, 397 residues long: CCA-adding enzyme (397 aa).

Residues Gly-26 and Arg-29 each coordinate ATP. Gly-26 and Arg-29 together coordinate CTP. The Mg(2+) site is built by Asp-39 and Asp-41. Arg-110, Asp-153, Arg-156, Arg-159, and Arg-162 together coordinate ATP. CTP contacts are provided by Arg-110, Asp-153, Arg-156, Arg-159, and Arg-162.

The protein belongs to the tRNA nucleotidyltransferase/poly(A) polymerase family. Bacterial CCA-adding enzyme type 3 subfamily. In terms of assembly, homodimer. The cofactor is Mg(2+).

It catalyses the reaction a tRNA precursor + 2 CTP + ATP = a tRNA with a 3' CCA end + 3 diphosphate. The catalysed reaction is a tRNA with a 3' CCA end + 2 CTP + ATP = a tRNA with a 3' CCACCA end + 3 diphosphate. In terms of biological role, catalyzes the addition and repair of the essential 3'-terminal CCA sequence in tRNAs without using a nucleic acid template. Adds these three nucleotides in the order of C, C, and A to the tRNA nucleotide-73, using CTP and ATP as substrates and producing inorganic pyrophosphate. tRNA 3'-terminal CCA addition is required both for tRNA processing and repair. Also involved in tRNA surveillance by mediating tandem CCA addition to generate a CCACCA at the 3' terminus of unstable tRNAs. While stable tRNAs receive only 3'-terminal CCA, unstable tRNAs are marked with CCACCA and rapidly degraded. This is CCA-adding enzyme from Bacillus cereus (strain G9842).